The sequence spans 471 residues: Ribulose bisphosphate carboxylase large chain 2 (471 aa).

Substrate contacts are provided by N116 and T166. K168 serves as the catalytic Proton acceptor. A substrate-binding site is contributed by K170. The Mg(2+) site is built by K194, D196, and E197. K194 is modified (N6-carboxylysine). H287 acts as the Proton acceptor in catalysis. 3 residues coordinate substrate: R288, H320, and S372.

It belongs to the RuBisCO large chain family. Type I subfamily. Heterohexadecamer of 8 large chains and 8 small chains. Requires Mg(2+) as cofactor.

The protein resides in the carboxysome. It catalyses the reaction 2 (2R)-3-phosphoglycerate + 2 H(+) = D-ribulose 1,5-bisphosphate + CO2 + H2O. The enzyme catalyses D-ribulose 1,5-bisphosphate + O2 = 2-phosphoglycolate + (2R)-3-phosphoglycerate + 2 H(+). Its function is as follows. RuBisCO catalyzes two reactions: the carboxylation of D-ribulose 1,5-bisphosphate, the primary event in carbon dioxide fixation, as well as the oxidative fragmentation of the pentose substrate. Both reactions occur simultaneously and in competition at the same active site. This Hydrogenovibrio marinus protein is Ribulose bisphosphate carboxylase large chain 2.